We begin with the raw amino-acid sequence, 130 residues long: ATP synthase epsilon chain, chloroplastic (130 aa).

It belongs to the ATPase epsilon chain family. As to quaternary structure, F-type ATPases have 2 components, CF(1) - the catalytic core - and CF(0) - the membrane proton channel. CF(1) has five subunits: alpha(3), beta(3), gamma(1), delta(1), epsilon(1). CF(0) has three main subunits: a, b and c.

The protein localises to the plastid. It is found in the chloroplast thylakoid membrane. Produces ATP from ADP in the presence of a proton gradient across the membrane. The polypeptide is ATP synthase epsilon chain, chloroplastic (Tupiella akineta (Green alga)).